Here is a 341-residue protein sequence, read N- to C-terminus: Glucokinase (341 aa).

7-12 (GDIGGT) provides a ligand contact to ATP.

This sequence belongs to the bacterial glucokinase family.

It is found in the cytoplasm. The catalysed reaction is D-glucose + ATP = D-glucose 6-phosphate + ADP + H(+). The protein is Glucokinase of Nostoc punctiforme (strain ATCC 29133 / PCC 73102).